The sequence spans 400 residues: Probable peptidoglycan glycosyltransferase FtsW (400 aa).

Transmembrane regions (helical) follow at residues 30-50 (LSVL…SIGI), 65-84 (QAAY…RIRL), 92-112 (GLLL…GVGV), 123-143 (LGLF…LYLA), 157-177 (FAGF…LLME), 179-199 (DFGA…LAGA), 201-221 (LWQF…LAIT), 247-267 (TQSL…GASV), 280-300 (FLFA…VVLL), 321-341 (LFGA…AFIN), and 356-376 (LPLM…VGLL).

The protein belongs to the SEDS family. FtsW subfamily.

Its subcellular location is the cell inner membrane. The catalysed reaction is [GlcNAc-(1-&gt;4)-Mur2Ac(oyl-L-Ala-gamma-D-Glu-L-Lys-D-Ala-D-Ala)](n)-di-trans,octa-cis-undecaprenyl diphosphate + beta-D-GlcNAc-(1-&gt;4)-Mur2Ac(oyl-L-Ala-gamma-D-Glu-L-Lys-D-Ala-D-Ala)-di-trans,octa-cis-undecaprenyl diphosphate = [GlcNAc-(1-&gt;4)-Mur2Ac(oyl-L-Ala-gamma-D-Glu-L-Lys-D-Ala-D-Ala)](n+1)-di-trans,octa-cis-undecaprenyl diphosphate + di-trans,octa-cis-undecaprenyl diphosphate + H(+). The protein operates within cell wall biogenesis; peptidoglycan biosynthesis. Functionally, peptidoglycan polymerase that is essential for cell division. The polypeptide is Probable peptidoglycan glycosyltransferase FtsW (Thioalkalivibrio sulfidiphilus (strain HL-EbGR7)).